Reading from the N-terminus, the 312-residue chain is Protein phosphatase 2A catalytic subunit B (312 aa).

Residues Asp-55, His-57, Asp-83, and Asn-115 each coordinate Mn(2+). Residue His-116 is the Proton donor of the active site. Residues His-165 and His-240 each contribute to the Mn(2+) site.

This sequence belongs to the PPP phosphatase family. PP-2A subfamily. As to quaternary structure, component of the Sca1 complex composed of at least gefA, gefH, scaA, phr, and the protein phosphatase 2A subunits pppA and pho2B. It depends on Mn(2+) as a cofactor.

Its subcellular location is the cell membrane. The catalysed reaction is O-phospho-L-seryl-[protein] + H2O = L-seryl-[protein] + phosphate. It catalyses the reaction O-phospho-L-threonyl-[protein] + H2O = L-threonyl-[protein] + phosphate. Functionally, component of the Sca1 complex, a regulator of cell motility, chemotaxis and signal relay. The Sca1 complex is recruited to the plasma membrane in a chemoattractant- and F-actin-dependent manner and is enriched at the leading edge of chemotaxing cells where it regulates F-actin dynamics and signal relay by controlling the activation of rasC and the downstream target of rapamycin complex 2 (TORC2)-Akt/protein kinase B (PKB) pathway. The protein is Protein phosphatase 2A catalytic subunit B of Dictyostelium discoideum (Social amoeba).